Reading from the N-terminus, the 361-residue chain is Phosphate acyltransferase (361 aa).

The protein belongs to the PlsX family. In terms of assembly, homodimer. Probably interacts with PlsY.

The protein localises to the cytoplasm. The catalysed reaction is a fatty acyl-[ACP] + phosphate = an acyl phosphate + holo-[ACP]. It participates in lipid metabolism; phospholipid metabolism. In terms of biological role, catalyzes the reversible formation of acyl-phosphate (acyl-PO(4)) from acyl-[acyl-carrier-protein] (acyl-ACP). This enzyme utilizes acyl-ACP as fatty acyl donor, but not acyl-CoA. The chain is Phosphate acyltransferase from Parvibaculum lavamentivorans (strain DS-1 / DSM 13023 / NCIMB 13966).